The sequence spans 146 residues: MDDEKYYIVKKKALPEVLLKVVEAKRLLDSERVMTIQEATDAVDISRSSFYKYKDDIFPFHENNRGKTITFMLQMDDIPGLLSMVLNQIAKSNANVLTIHQTIPIGGIASLTLGIEILPQTLELSQMLESIEALDGIHYLKILGRE.

Residues 70 to 145 (TFMLQMDDIP…GIHYLKILGR (76 aa)) form the ACT domain.

The protein belongs to the UPF0735 family.

The polypeptide is UPF0735 ACT domain-containing protein Cphy_3604 (Lachnoclostridium phytofermentans (strain ATCC 700394 / DSM 18823 / ISDg) (Clostridium phytofermentans)).